Consider the following 545-residue polypeptide: MKKRWSIVTLMLIFTLVLSACGFGGTGSNGEGKKDSKGKTTLNINIKTEPFSLHPGLANDSVSGGVIRQTFEGLTRINADGEPEEGMASKIETSKDGKTYTFTIRDGVKWSNGDPVTAQDFEYAWKWALDPNNESQYAYQLYYIKGAEAANTGKGSLDDVAVKAVNDKTLKVELNNPTPYFTELTAFYTYMPINEKIAEKNKKWNTNAGDDYVSNGPFKMTAWKHSGSITLEKNDQYWDKDKVKLKKIDMVMINNNNTELKKFQAGELDWAGMPLGQLPTESLPTLKKDGSLHVEPIAGVYWYKFNTEAKPLDNVNIRKALTYSLDRQSIVKNVTQGEQMPAMAAVPPTMKGFEDNKEGYFKDNDVKTAKEYLEKGLKEMGLSKASDLPKIKLSYNTDDAHAKIAQAVQEMWKKNLGVDVELDNSEWNVYIDKLHSQDYQIGRMGWLGDFNDPINFLELFRDKNGGNNDTGWENPEFKKLLNQSQTETDKTKRAELLKKAEGIFIDEMPVAPIYFYTDTWVQDENLKGVIMPGTGEVYFRNAYFK.

An N-terminal signal peptide occupies residues 1–20 (MKKRWSIVTLMLIFTLVLSA). The N-palmitoyl cysteine moiety is linked to residue cysteine 21. Cysteine 21 carries S-diacylglycerol cysteine lipidation. Threonine 470 is subject to Phosphothreonine.

This sequence belongs to the bacterial solute-binding protein 5 family. In terms of assembly, the complex is composed of two ATP-binding proteins (OppD and OppF), two transmembrane proteins (OppB and OppC) and a solute-binding protein (OppA). OppA interacts with FloT in detergent-resistant membranes (DRM). Colocalizes rarely with FloT membrane assemblies.

The protein localises to the cell membrane. The protein resides in the membrane raft. Part of the ABC transporter complex OppABCDF involved in the uptake of oligopeptides. Plays an important nutritional role. Binds peptides containing up to five amino acids residues regardless of their sequence, with highest affinity for tetra- and pentapeptides. Binds to the sporulation-promoting peptide PhrE (Ser-Arg-Asn-Val-Thr). Required for sporulation and genetic competence. This is Oligopeptide-binding protein OppA from Bacillus subtilis (strain 168).